Consider the following 529-residue polypeptide: Interleukin-21 receptor (529 aa).

The signal sequence occupies residues 1 to 19; the sequence is MPRGPVAALLLLILHGAWS. 3 disulfides stabilise this stretch: Cys20–Cys109, Cys25–Cys35, and Cys65–Cys81. Over 20–237 the chain is Extracellular; sequence CLDLTCYTDY…GEPEAGWDPH (218 aa). Fibronectin type-III domains follow at residues 21-118 and 119-228; these read LDLT…AESI and KPAP…TQAG. N-linked (GlcNAc...) asparagine glycosylation is found at Asn73, Asn97, Asn104, Asn125, and Asn182. Trp214 is a glycosylation site (C-linked (Man) tryptophan). The WSXWS motif signature appears at 214–218; that stretch reads WSEWS. Residues 238-258 traverse the membrane as a helical segment; sequence MLLLLAVLIIVLVFMGLKIHL. Over 259 to 529 the chain is Cytoplasmic; that stretch reads PWRLWKKIWA…PPVDSGAQSS (271 aa). The Box 1 motif signature appears at 266–274; the sequence is IWAPVPTPE. A disordered region spans residues 458 to 529; the sequence is TADPTWRTGS…PPVDSGAQSS (72 aa).

It belongs to the type I cytokine receptor family. Type 4 subfamily. Heterodimer with the common gamma subunit. Associates with JAK1. In terms of processing, C-mannosylated at Trp-214 in the WSXWS motif, the sugar chain makes extensive hydrogen bonds with Asn-73 sugar, and bridges the two fibronectin domains transforming the V-shaped receptor into an A-frame. Selectively expressed in lymphoid tissues. Most highly expressed in thymus and spleen.

It localises to the membrane. Functionally, this is a receptor for interleukin-21. The polypeptide is Interleukin-21 receptor (Il21r) (Mus musculus (Mouse)).